We begin with the raw amino-acid sequence, 312 residues long: Malate dehydrogenase (312 aa).

NAD(+)-binding positions include 7-13 (GAAGGIG) and Asp34. Substrate-binding residues include Arg81 and Arg87. NAD(+)-binding positions include Asn94 and 117–119 (ITN). Residues Asn119 and Arg153 each contribute to the substrate site. The active-site Proton acceptor is His177. Met227 contributes to the NAD(+) binding site.

It belongs to the LDH/MDH superfamily. MDH type 1 family. Homodimer.

The catalysed reaction is (S)-malate + NAD(+) = oxaloacetate + NADH + H(+). In terms of biological role, catalyzes the reversible oxidation of malate to oxaloacetate. The protein is Malate dehydrogenase of Photorhabdus laumondii subsp. laumondii (strain DSM 15139 / CIP 105565 / TT01) (Photorhabdus luminescens subsp. laumondii).